The sequence spans 154 residues: SsrA-binding protein (154 aa).

Positions 123–142 (AEHDKRHTIKDRDWQREQGR) are enriched in basic and acidic residues. Residues 123–154 (AEHDKRHTIKDRDWQREQGRLMRHKVSAPHKD) are disordered. The segment covering 143 to 154 (LMRHKVSAPHKD) has biased composition (basic residues).

This sequence belongs to the SmpB family.

Its subcellular location is the cytoplasm. Required for rescue of stalled ribosomes mediated by trans-translation. Binds to transfer-messenger RNA (tmRNA), required for stable association of tmRNA with ribosomes. tmRNA and SmpB together mimic tRNA shape, replacing the anticodon stem-loop with SmpB. tmRNA is encoded by the ssrA gene; the 2 termini fold to resemble tRNA(Ala) and it encodes a 'tag peptide', a short internal open reading frame. During trans-translation Ala-aminoacylated tmRNA acts like a tRNA, entering the A-site of stalled ribosomes, displacing the stalled mRNA. The ribosome then switches to translate the ORF on the tmRNA; the nascent peptide is terminated with the 'tag peptide' encoded by the tmRNA and targeted for degradation. The ribosome is freed to recommence translation, which seems to be the essential function of trans-translation. This chain is SsrA-binding protein, found in Leptothrix cholodnii (strain ATCC 51168 / LMG 8142 / SP-6) (Leptothrix discophora (strain SP-6)).